Here is a 177-residue protein sequence, read N- to C-terminus: Large ribosomal subunit protein uL6 (177 aa).

This sequence belongs to the universal ribosomal protein uL6 family. Part of the 50S ribosomal subunit.

Its function is as follows. This protein binds to the 23S rRNA, and is important in its secondary structure. It is located near the subunit interface in the base of the L7/L12 stalk, and near the tRNA binding site of the peptidyltransferase center. The chain is Large ribosomal subunit protein uL6 from Alteromonas mediterranea (strain DSM 17117 / CIP 110805 / LMG 28347 / Deep ecotype).